Reading from the N-terminus, the 427-residue chain is Tryptophan synthase beta chain 1 (427 aa).

Lys-107 carries the post-translational modification N6-(pyridoxal phosphate)lysine.

It belongs to the TrpB family. Tetramer of two alpha and two beta chains. It depends on pyridoxal 5'-phosphate as a cofactor.

It catalyses the reaction (1S,2R)-1-C-(indol-3-yl)glycerol 3-phosphate + L-serine = D-glyceraldehyde 3-phosphate + L-tryptophan + H2O. It participates in amino-acid biosynthesis; L-tryptophan biosynthesis; L-tryptophan from chorismate: step 5/5. In terms of biological role, the beta subunit is responsible for the synthesis of L-tryptophan from indole and L-serine. This chain is Tryptophan synthase beta chain 1 (trpB1), found in Aeropyrum pernix (strain ATCC 700893 / DSM 11879 / JCM 9820 / NBRC 100138 / K1).